The sequence spans 546 residues: Medium-chain-fatty-acid--CoA ligase (546 aa).

Threonine 185 is a Mg(2+) binding site. Residues tryptophan 235 and threonine 329 each coordinate ATP. Glutamate 330 serves as a coordination point for Mg(2+). ATP-binding residues include aspartate 417, lysine 434, lysine 438, and tryptophan 443.

It belongs to the ATP-dependent AMP-binding enzyme family.

It is found in the cytoplasm. It carries out the reaction a medium-chain fatty acid + ATP + CoA = a medium-chain fatty acyl-CoA + AMP + diphosphate. The protein operates within lipid metabolism; fatty acid metabolism. This is Medium-chain-fatty-acid--CoA ligase from Ectopseudomonas oleovorans (Pseudomonas oleovorans).